The following is a 420-amino-acid chain: COP9 signalosome complex subunit 11 (420 aa).

Positions 177 to 346 (SIHEHPSLVD…VYYKEDLPVG (170 aa)) constitute a PCI domain. Residues 386–420 (VEPLNRSQDMDAFELHEQSEDEEYEEEHLEEGENV) form a disordered region. Residues 404-420 (SEDEEYEEEHLEEGENV) are compositionally biased toward acidic residues.

In terms of assembly, component of a COP9 signalosome-like (CSN) complex.

It localises to the cytoplasm. The protein resides in the nucleus. Component of the COP9 signalosome (CSN) complex that acts as an regulator of the ubiquitin (Ubl) conjugation pathway by mediating the deneddylation of the cullin subunit of SCF-type E3 ubiquitin-protein ligase complexes The CSN complex is involved in the regulation of the mating pheromone response. PCI8 may also be involved in transcriptional and translational control. The sequence is that of COP9 signalosome complex subunit 11 (PCI8) from Eremothecium gossypii (strain ATCC 10895 / CBS 109.51 / FGSC 9923 / NRRL Y-1056) (Yeast).